The following is a 204-amino-acid chain: DNA-binding transcriptional activator EvgA (204 aa).

Residues 2-117 (NAIIIDDHPL…NIIAAIEAAK (116 aa)) enclose the Response regulatory domain. Residue D52 is modified to 4-aspartylphosphate. Residues 137-202 (DQQKLDSLSK…DLYTFAQRNK (66 aa)) enclose the HTH luxR-type domain. Positions 161-180 (NNDIAEKMFISNKTVSTYKS) form a DNA-binding region, H-T-H motif.

As to quaternary structure, homodimer. Post-translationally, phosphorylated by EvgS.

It is found in the cytoplasm. Functionally, member of the two-component regulatory system EvgS/EvgA. Regulates the expression of emrKY operon and yfdX. Also seems to control expression of at least one other multidrug efflux operon. The sequence is that of DNA-binding transcriptional activator EvgA (evgA) from Escherichia coli O157:H7.